The primary structure comprises 492 residues: Monocarboxylate transporter 3 (492 aa).

The Cytoplasmic portion of the chain corresponds to 1-14; the sequence is MGAGGPRRGAGPPD. Residues 15–35 form a helical membrane-spanning segment; the sequence is GGWGWVVLGACFVVTGFAYGF. The Extracellular portion of the chain corresponds to 36–58; it reads PKAVSVFFRELKRDFGAGYSDTA. A helical membrane pass occupies residues 59–79; that stretch reads WVSSIMLAMLYGTGPLSSILV. The Cytoplasmic portion of the chain corresponds to 80–85; the sequence is TRFGCR. The helical transmembrane segment at 86 to 106 threads the bilayer; the sequence is PVMLAGGLLASAGMILASFAS. Over 107–115 the chain is Extracellular; the sequence is RLVELYLTA. Residues 116–136 traverse the membrane as a helical segment; the sequence is GVLTGLGLALNFQPSLIMLGL. Over 137 to 146 the chain is Cytoplasmic; that stretch reads YFERRRPLAN. Residues 147–167 form a helical membrane-spanning segment; sequence GLAAAGSPVFLSMLSPLGQLL. Over 168–172 the chain is Extracellular; sequence GERFG. A helical transmembrane segment spans residues 173 to 193; that stretch reads WRGGFLLFGGLLLHCCACGAV. The Cytoplasmic portion of the chain corresponds to 194-228; it reads MRPPPGPPPRRDPSPHGGPARRRRLLDVAVCTDRA. A helical membrane pass occupies residues 229–249; sequence FVVYVVTKFLMALGLFVPAIL. Over 250–257 the chain is Extracellular; the sequence is LVNYAKDA. The chain crosses the membrane as a helical span at residues 258–278; the sequence is GVPDAEAAFLLSIVGFVDIVA. The Cytoplasmic segment spans residues 279-293; it reads RPACGALAGLGRLRP. The helical transmembrane segment at 294–314 threads the bilayer; the sequence is HVPYLFSLALLANGLTDLISA. The Extracellular segment spans residues 315–318; the sequence is RARS. A helical membrane pass occupies residues 319–339; it reads YGTLVAFCIAFGLSYGMVGAL. At 340–352 the chain is on the cytoplasmic side; the sequence is QFEVLMATVGAPR. Residues 353–373 traverse the membrane as a helical segment; the sequence is FPSALGLVLLVEAVAVLIGPP. Residues 374-386 are Extracellular-facing; sequence SAGRLVDALKNYE. A helical membrane pass occupies residues 387-407; it reads IIFYLAGSEVALAGVFMAVTT. Residues 408–492 are Cytoplasmic-facing; the sequence is YCCLRCSKNI…GGHEARGQKA (85 aa). Positions 419 to 492 are disordered; that stretch reads SGRSAEGGAS…GGHEARGQKA (74 aa). 2 basolateral sorting signal regions span residues 426–460 and 461–482; these read GASD…VLSP and RAGS…HESI. Basic and acidic residues predominate over residues 476 to 492; it reads ELDHESIGGHEARGQKA.

Belongs to the major facilitator superfamily. Monocarboxylate porter (TC 2.A.1.13) family. Expressed exclusively in retinal pigment epithelium and choroid plexus epithelium.

It localises to the basolateral cell membrane. It carries out the reaction (S)-lactate(in) + H(+)(in) = (S)-lactate(out) + H(+)(out). Functionally, probable retinal pigment epithelium (RPE)-specific proton-coupled L-lactate transporter. May facilitate transport of lactate and H(+) out of the retina and could therefore play an essential role in maintenance of metabolic and ionic homeostasis of the outer retina. This chain is Monocarboxylate transporter 3 (Slc16a8), found in Mus musculus (Mouse).